Reading from the N-terminus, the 339-residue chain is 1-aminocyclopropane-1-carboxylate deaminase (339 aa).

Lys52 carries the N6-(pyridoxal phosphate)lysine modification. The Nucleophile role is filled by Ser79.

This sequence belongs to the ACC deaminase/D-cysteine desulfhydrase family. As to quaternary structure, homotrimer. The cofactor is pyridoxal 5'-phosphate.

The enzyme catalyses 1-aminocyclopropane-1-carboxylate + H2O = 2-oxobutanoate + NH4(+). Functionally, catalyzes a cyclopropane ring-opening reaction, the irreversible conversion of 1-aminocyclopropane-1-carboxylate (ACC) to ammonia and alpha-ketobutyrate. Allows growth on ACC as a nitrogen source. The chain is 1-aminocyclopropane-1-carboxylate deaminase from Rhizobium leguminosarum bv. viciae.